A 205-amino-acid chain; its full sequence is Lymphotoxin-alpha (205 aa).

Residues 1 to 34 (MTPPERLFLSRVRGTPLHLLLLGLLLVLLPGAQG) form the signal peptide. O-linked (GalNAc...) threonine glycosylation is present at Thr41. Residues 63–205 (PAAHLIGDPS…STVFFGAFAL (143 aa)) enclose the THD domain. An N-linked (GlcNAc...) asparagine glycan is attached at Asn96.

It belongs to the tumor necrosis factor family. As to quaternary structure, homotrimer, and heterotrimer of either two LTB and one LTA subunits or (less prevalent) two LTA and one LTB subunits. Interacts with TNFRSF14.

Its subcellular location is the secreted. The protein localises to the membrane. Cytokine that in its homotrimeric form binds to TNFRSF1A/TNFR1, TNFRSF1B/TNFBR and TNFRSF14/HVEM. In its heterotrimeric form with LTB binds to TNFRSF3/LTBR. Lymphotoxin is produced by lymphocytes and is cytotoxic for a wide range of tumor cells in vitro and in vivo. This Macaca mulatta (Rhesus macaque) protein is Lymphotoxin-alpha (LTA).